The chain runs to 375 residues: MPRVVIGMSGGVDSAVSAFLLKKRGFDVIGLHMINWDVQEEGTSHCPRSKDESDARNVCDRLNIPFHTVNFVKEYWNDVFLKFLENYKNGRTTVPDIDCNQSIKFDVFHKIAREKFNADFIATGHYATTNFGDFQQNAKDSDEIRLFSGKDPLKDQTFFLCTVNQEQLKRAMFPLGSLQKSEVKRIAEEQGFQEVAKKPESMGICFIGKKKRFSDFLDEYIEPKPGRILLKNGSEIGNHHGIHQFTIGKRINGKYLEARSHLGFFVSHIHSDTGDIIACEGSHHPDLYASRFLINHPKWIRTFDPFNRISSNNFLCRIQRTHPPIPCVAEKQEQFLSVIPRLALRATAPGQMCVFYNTKNECLGGGEIMNIQETL.

Residues G7 to S14 and M33 contribute to the ATP site. The interaction with target base in tRNA stretch occupies residues V94–D96. Residue C99 is the Nucleophile of the active site. C99 and C205 are joined by a disulfide. G124 is an ATP binding site. Residues K154 to Q156 form an interaction with tRNA region. C205 acts as the Cysteine persulfide intermediate in catalysis. The interaction with tRNA stretch occupies residues Q319–R320.

The protein belongs to the MnmA/TRMU family.

It is found in the mitochondrion. It carries out the reaction 5-taurinomethyluridine(34) in tRNA + S-sulfanyl-L-cysteinyl-[protein] + AH2 + ATP = 5-taurinomethyl-2-thiouridine(34) in tRNA + L-cysteinyl-[protein] + A + AMP + diphosphate + H(+). Catalyzes the 2-thiolation of uridine at the wobble position (U34) of mitochondrial tRNA(Lys), tRNA(Glu) and tRNA(Gln). Required for the formation of 5-taurinomethyl-2-thiouridine (tm5s2U) of mitochondrial tRNA(Lys), tRNA(Glu), and tRNA(Gln) at the wobble position. ATP is required to activate the C2 atom of the wobble base. In Caenorhabditis elegans, this protein is Probable mitochondrial tRNA-specific 2-thiouridylase 1.